A 108-amino-acid chain; its full sequence is Protein S100-A15A (108 aa).

The region spanning 53–88 (KEPYYVTELFQATDKNRDNQICFDEFLYILGKLVKD) is the EF-hand domain. Ca(2+)-binding residues include Asp66, Asn68, Asp70, Gln72, and Glu77.

It belongs to the S-100 family.

The protein is Protein S100-A15A (S100A15A) of Gorilla gorilla gorilla (Western lowland gorilla).